A 611-amino-acid chain; its full sequence is Lanthanide-dependent methanol dehydrogenase (611 aa).

An N-terminal signal peptide occupies residues 1–34 (MTVKLKKPKKYAVAKNATLLAAFGLIGSLSLAKA). Cysteine 138 and cysteine 139 are disulfide-bonded. 5 residues coordinate pyrroloquinoline quinone: arginine 144, threonine 188, serine 203, glycine 204, and glycine 205. Glutamate 206 contributes to the Ce(3+) binding site. Glutamate 206 is a Eu(3+) binding site. Pyrroloquinoline quinone-binding residues include threonine 270 and tryptophan 272. Asparagine 290, aspartate 333, and aspartate 335 together coordinate Ce(3+). Eu(3+)-binding residues include asparagine 290, aspartate 333, and aspartate 335. A pyrroloquinoline quinone-binding site is contributed by arginine 360. The cysteines at positions 414 and 443 are disulfide-linked. Tryptophan 501 and tryptophan 566 together coordinate pyrroloquinoline quinone.

This sequence belongs to the bacterial PQQ dehydrogenase family. As to quaternary structure, homodimer. Ce(3+) serves as cofactor. The cofactor is La(3+). Nd(3+) is required as a cofactor. It depends on Pr(3+) as a cofactor. Requires Eu(3+) as cofactor. Pyrroloquinoline quinone serves as cofactor.

The protein localises to the periplasm. The enzyme catalyses 2 Fe(III)-[cytochrome cL] + methanol = 2 Fe(II)-[cytochrome cL] + formaldehyde + 2 H(+). It catalyses the reaction 4 Fe(III)-[cytochrome cL] + methanol + H2O = 4 Fe(II)-[cytochrome cL] + formate + 5 H(+). The catalysed reaction is 2 Fe(III)-[cytochrome cL] + a primary alcohol = 2 Fe(II)-[cytochrome cL] + an aldehyde + 2 H(+). Its pathway is one-carbon metabolism; methanol degradation. Its function is as follows. Catalyzes the oxidation of methanol to formaldehyde or formate in the presence of lanthanides (Ln). Is a key enzyme in methane/methanol metabolism, allowing M.fumariolicum to grow on methane as the sole carbon and energy source. Can also act on other primary alcohols in vitro, such as ethanol, 1-propanol, 1-butanol, and 1-hexanol, but is not able to oxidize secondary alcohols and acetaldehyde. Uses a specific cytochrome cL, encoded by the adjacent gene in the locus, as electron acceptor. This Methylacidiphilum fumariolicum (strain SolV) protein is Lanthanide-dependent methanol dehydrogenase.